A 519-amino-acid chain; its full sequence is Cytochrome P450 monooxygenase apdE (519 aa).

The helical transmembrane segment at 27 to 47 threads the bilayer; the sequence is FVFFAFVVYSCFTIAVGWVVY. N-linked (GlcNAc...) asparagine glycans are attached at residues N327 and N379. C466 serves as a coordination point for heme. Residue N508 is glycosylated (N-linked (GlcNAc...) asparagine).

This sequence belongs to the cytochrome P450 family. Heme is required as a cofactor.

It is found in the membrane. It functions in the pathway secondary metabolite biosynthesis. Cytochrome P450 monooxygenase; part of the gene cluster that mediates the biosynthesis of aspyridones. The polyketide-amino acid backbone preaspyridone A is first assembled by the PKS-NRPS hybrid apdA. The assembly of preaspyridone A is initiated by loading of malonyl-CoA onto apdA, followed by decarboxylation to yield the acetyl starter unit. The growing polyketide chain then elongates into a tetraketide. The adpA PKS module catalyzes three Claisen condensations, as well as beta-keto processing and methylation. Alpha-methylation step during polyketide synthesis is a prerequisite and a key checkpoint for chain transfer between PKS and NRPS modules. The downstream NRPS module contains the condensation (C), adenylation (A), and thiolation (T) domains and catalyzes the incorporation of tyrosine via the formation of the L-tyrosinyl-thioester and the amide linkage between L-tyrosinyl-thioester and the tetraketide. The bimodular assembly line is terminated with a reductase (R) domain that facilitates formation and release of the tetramic acid product. Because apdA lacks a designated enoylreductase (ER) domain, the required activity is provided the enoyl reductase apdC. ApdC appears to operate with different stereoselectivity in different PKS cycle. Combined with apdC, apdA is proposed to synthesize preaspyridone A via about 20 enzymatic steps. A number of oxidative steps performed successively by the cytochrome P450 monooxygenases apdE and apdB are required for the conversion of preaspyridone A to aspyridone A. The cytochrome P450 monooxygenase apdE is responsible for the oxidative dephenylation of preaspyridone A. Finally, the predicted FAD-dependent monooxygenase apdD and the acyl-CoA dehydrogenase apdG may be involved in the transformation of aspyridone A into aspyridone B. In Emericella nidulans (strain FGSC A4 / ATCC 38163 / CBS 112.46 / NRRL 194 / M139) (Aspergillus nidulans), this protein is Cytochrome P450 monooxygenase apdE.